We begin with the raw amino-acid sequence, 240 residues long: Glutathione S-transferase theta-1 (240 aa).

Positions 2–82 (GLELYLDLLS…YLTRKYKVPD (81 aa)) constitute a GST N-terminal domain. Residues histidine 40, 53 to 54 (KV), and 66 to 67 (ES) each bind glutathione. The GST C-terminal domain maps to 88–220 (DLQARARVDE…HEVILKAKDF (133 aa)).

This sequence belongs to the GST superfamily. Theta family. As to quaternary structure, homodimer. Found in erythrocyte. Expressed at low levels in liver. In lung, expressed at low levels in club cells and ciliated cells at the alveolar/bronchiolar junction. Absent from epithelial cells of larger bronchioles.

The protein resides in the cytoplasm. The enzyme catalyses RX + glutathione = an S-substituted glutathione + a halide anion + H(+). Functionally, conjugation of reduced glutathione to a wide number of exogenous and endogenous hydrophobic electrophiles. Acts on 1,2-epoxy-3-(4-nitrophenoxy)propane, phenethylisothiocyanate 4-nitrobenzyl chloride and 4-nitrophenethyl bromide. Displays glutathione peroxidase activity with cumene hydroperoxide. This is Glutathione S-transferase theta-1 (GSTT1) from Homo sapiens (Human).